Here is a 382-residue protein sequence, read N- to C-terminus: Mannitol-1-phosphate 5-dehydrogenase (382 aa).

Residue 3–14 (ALHFGAGNIGRG) participates in NAD(+) binding. At lysine 269 the chain carries N6-acetyllysine.

Belongs to the mannitol dehydrogenase family.

The catalysed reaction is D-mannitol 1-phosphate + NAD(+) = beta-D-fructose 6-phosphate + NADH + H(+). This Shigella sonnei (strain Ss046) protein is Mannitol-1-phosphate 5-dehydrogenase.